A 340-amino-acid polypeptide reads, in one-letter code: Sulfotransferase ppzF (340 aa).

It participates in secondary metabolite biosynthesis. Its function is as follows. Sulfotransferase; part of the gene cluster that mediates the biosynthesis of pyrrolopyrazines, secondary metabolites showing insecticidal activity. The role of ppzF within the pathway has still to be determined. The single multifunctional NRPS ppzA is sufficient to produce peramine via condensation of 1-pyrroline-5-carboxylate and arginine, N-methylation of the alpha-amino group of arginine and reduction of the thioester and the cyclization to form an iminium ion resulting in release from the peptide synthetase. Deprotonation of this intermediate and oxidation of the pyrroline ring would give rise to peramine. In Epichloe species that produce only peramine, the peramine synthetase gene is not localized in a gene cluster, in contrast to Metarhizium species that contain additional pyrrolopyrazine biosynthesis genes. The 2-oxoglutarate-Fe(II) type oxidoreductase ppzC hydroxylates peramine to yield the newly identified compound 8-hydroxyperamine whereas ppzD converts L-proline into trans-4-hydroxy-L-proline, a precursor of peramine biosynthesis. In Metarhizium majus (strain ARSEF 297), this protein is Sulfotransferase ppzF.